Here is a 541-residue protein sequence, read N- to C-terminus: Catalase (541 aa).

The interval 1-20 (MPQTKGKPHEEQLEQYKNSQ) is disordered. Residues His-74 and Asn-147 contribute to the active site. Tyr-357 is a binding site for heme.

It belongs to the catalase family. It depends on heme as a cofactor.

The protein resides in the peroxisome matrix. It catalyses the reaction 2 H2O2 = O2 + 2 H2O. Functionally, catalyzes the degradation of hydrogen peroxide (H(2)O(2)) generated by peroxisomal oxidases to water and oxygen, thereby protecting cells from the toxic effects of hydrogen peroxide. The sequence is that of Catalase (CAT) from Ascaris suum (Pig roundworm).